Here is a 445-residue protein sequence, read N- to C-terminus: Methionine aminopeptidase 2-2 (445 aa).

The disordered stretch occupies residues Met-1–Asn-92. Residues Ala-18–Ala-33 are compositionally biased toward low complexity. The segment covering Gly-34–Asp-46 has biased composition (acidic residues). Residues Gly-47 to Ala-58 are compositionally biased toward low complexity. Basic residues predominate over residues Ala-59–Gly-74. His-198 contributes to the substrate binding site. Residues Asp-218, Asp-229, and His-298 each coordinate a divalent metal cation. His-306 lines the substrate pocket. Residues Glu-331 and Glu-426 each coordinate a divalent metal cation.

Belongs to the peptidase M24A family. Methionine aminopeptidase eukaryotic type 2 subfamily. Requires Co(2+) as cofactor. Zn(2+) serves as cofactor. It depends on Mn(2+) as a cofactor. Fe(2+) is required as a cofactor.

It localises to the cytoplasm. It carries out the reaction Release of N-terminal amino acids, preferentially methionine, from peptides and arylamides.. Functionally, cotranslationally removes the N-terminal methionine from nascent proteins. The N-terminal methionine is often cleaved when the second residue in the primary sequence is small and uncharged (Met-Ala-, Cys, Gly, Pro, Ser, Thr, or Val). The protein is Methionine aminopeptidase 2-2 of Aspergillus terreus (strain NIH 2624 / FGSC A1156).